The following is a 258-amino-acid chain: Proteasome subunit alpha (258 aa).

Belongs to the peptidase T1A family. As to quaternary structure, the 20S proteasome core is composed of 14 alpha and 14 beta subunits that assemble into four stacked heptameric rings, resulting in a barrel-shaped structure. The two inner rings, each composed of seven catalytic beta subunits, are sandwiched by two outer rings, each composed of seven alpha subunits. The catalytic chamber with the active sites is on the inside of the barrel. Has a gated structure, the ends of the cylinder being occluded by the N-termini of the alpha-subunits. Is capped by the proteasome-associated ATPase, ARC.

The protein resides in the cytoplasm. The protein operates within protein degradation; proteasomal Pup-dependent pathway. The formation of the proteasomal ATPase ARC-20S proteasome complex, likely via the docking of the C-termini of ARC into the intersubunit pockets in the alpha-rings, may trigger opening of the gate for substrate entry. Interconversion between the open-gate and close-gate conformations leads to a dynamic regulation of the 20S proteasome proteolysis activity. In terms of biological role, component of the proteasome core, a large protease complex with broad specificity involved in protein degradation. This is Proteasome subunit alpha from Nocardia farcinica (strain IFM 10152).